A 214-amino-acid chain; its full sequence is MTLGLVGRKVGMTRVFDEQGVSVPVTVLDMSANRVTQVKSKDTDGYTAVQVTFGQKKANRVNKAEAGHFAKAGVEAGRGLIEFALTEEKLAELKAGDEITVSMFEVGQLVDVTGTSKGKGFSGTIKRHNFGAQRTSHGNSRSHRVPGSIGMAQDPGRVFPGKRMAGQYGNTKATVQKLEVVRVDAERQLLLVKGAVPGAVNSDVVVRPSVKVGA.

The interval G131–P155 is disordered. Q153 is modified (N5-methylglutamine).

Belongs to the universal ribosomal protein uL3 family. Part of the 50S ribosomal subunit. Forms a cluster with proteins L14 and L19. Methylated by PrmB.

One of the primary rRNA binding proteins, it binds directly near the 3'-end of the 23S rRNA, where it nucleates assembly of the 50S subunit. The sequence is that of Large ribosomal subunit protein uL3 from Neisseria gonorrhoeae (strain ATCC 700825 / FA 1090).